The chain runs to 208 residues: Ribosomal RNA small subunit methyltransferase G (208 aa).

Residues Gly-76, Leu-81, 127–128 (VE), and Arg-142 each bind S-adenosyl-L-methionine.

It belongs to the methyltransferase superfamily. RNA methyltransferase RsmG family.

It is found in the cytoplasm. The enzyme catalyses guanosine(527) in 16S rRNA + S-adenosyl-L-methionine = N(7)-methylguanosine(527) in 16S rRNA + S-adenosyl-L-homocysteine. Specifically methylates the N7 position of guanine in position 527 of 16S rRNA. The polypeptide is Ribosomal RNA small subunit methyltransferase G (Legionella pneumophila subsp. pneumophila (strain Philadelphia 1 / ATCC 33152 / DSM 7513)).